We begin with the raw amino-acid sequence, 478 residues long: Stromelysin-1 (478 aa).

Residues 1–17 form the signal peptide; it reads MQNLPALLLFCGVVCSA. Residues 18–99 constitute a propeptide, activation peptide; it reads YPVDRAAEDE…PRCGVPDVGD (82 aa). Positions 90–97 match the Cysteine switch motif; it reads PRCGVPDV. Residue Cys92 participates in Zn(2+) binding. Residues Asp124 and Asp158 each contribute to the Ca(2+) site. Residues His168 and Asp170 each coordinate Zn(2+). 4 residues coordinate Ca(2+): Asp175, Gly176, Gly178, and Val180. His183 contacts Zn(2+). The Ca(2+) site is built by Gly190 and Asp194. His196 is a Zn(2+) binding site. Positions 198, 199, and 201 each coordinate Ca(2+). Position 218 (His218) interacts with Zn(2+). Glu219 is an active-site residue. Zn(2+) is bound by residues His222 and His228. A disordered region spans residues 260 to 286; it reads QSLYGGPPSDSSNDPVVPTESVPPGPG. A compositionally biased stretch (low complexity) spans 266–277; sequence PPSDSSNDPVVP. Hemopexin repeat units follow at residues 288–337, 338–384, 386–434, and 435–478; these read PAAC…WPSL, PSGL…GFPP, VKKI…FPGV, and DSKV…WLNC. The cysteines at positions 291 and 478 are disulfide-linked. Residue Asp298 participates in Ca(2+) binding. 2 residues coordinate Ca(2+): Asp390 and Asp439. Asn452 carries N-linked (GlcNAc...) asparagine glycosylation.

It belongs to the peptidase M10A family. Requires Ca(2+) as cofactor. The cofactor is Zn(2+).

It localises to the secreted. It is found in the extracellular space. Its subcellular location is the extracellular matrix. The enzyme catalyses Preferential cleavage where P1', P2' and P3' are hydrophobic residues.. Its function is as follows. Metalloproteinase with a rather broad substrate specificity that can degrade fibronectin, laminin, gelatins of type I, III, IV, and V; collagens III, IV, X, and IX, and cartilage proteoglycans. Activates different molecules including growth factors, plasminogen or other matrix metalloproteinases such as MMP9. Once released into the extracellular matrix (ECM), the inactive pro-enzyme is activated by the plasmin cascade signaling pathway. Also acts intracellularly. For example, in dopaminergic neurons, gets activated by the serine protease HTRA2 upon stress and plays a pivotal role in DA neuronal degeneration by mediating microglial activation and alpha-synuclein/SNCA cleavage. In addition, plays a role in immune response and possesses antiviral activity against various viruses. Mechanistically, translocates from the cytoplasm into the cell nucleus upon virus infection to influence NF-kappa-B activities. The polypeptide is Stromelysin-1 (MMP3) (Canis lupus familiaris (Dog)).